The chain runs to 564 residues: Proline--tRNA ligase (564 aa).

It belongs to the class-II aminoacyl-tRNA synthetase family. ProS type 1 subfamily. Homodimer.

It localises to the cytoplasm. It carries out the reaction tRNA(Pro) + L-proline + ATP = L-prolyl-tRNA(Pro) + AMP + diphosphate. In terms of biological role, catalyzes the attachment of proline to tRNA(Pro) in a two-step reaction: proline is first activated by ATP to form Pro-AMP and then transferred to the acceptor end of tRNA(Pro). As ProRS can inadvertently accommodate and process non-cognate amino acids such as alanine and cysteine, to avoid such errors it has two additional distinct editing activities against alanine. One activity is designated as 'pretransfer' editing and involves the tRNA(Pro)-independent hydrolysis of activated Ala-AMP. The other activity is designated 'posttransfer' editing and involves deacylation of mischarged Ala-tRNA(Pro). The misacylated Cys-tRNA(Pro) is not edited by ProRS. The polypeptide is Proline--tRNA ligase (Xanthomonas axonopodis pv. citri (strain 306)).